The primary structure comprises 269 residues: Oligoribonuclease, mitochondrial (269 aa).

Residues 55–227 enclose the Exonuclease domain; sequence LVWIDCEMTG…SDIKESIAQL (173 aa). Tyr-184 is a catalytic residue. The segment at 240-269 is disordered; it reads ETESVESIGSEQPESPSSSTSSLKRQRTDF. Positions 245 to 261 are enriched in low complexity; sequence ESIGSEQPESPSSSTSS.

The protein belongs to the oligoribonuclease family.

The protein localises to the mitochondrion. 3'-to-5' exoribonuclease specific for small oligoribonucleotides. The protein is Oligoribonuclease, mitochondrial (REX2) of Saccharomyces cerevisiae (strain ATCC 204508 / S288c) (Baker's yeast).